The chain runs to 679 residues: Methionine--tRNA ligase (679 aa).

The 'HIGH' region signature appears at 14 to 24 (PYANGSIHLGH). The Zn(2+) site is built by cysteine 145, cysteine 148, cysteine 158, and cysteine 161. The 'KMSKS' region motif lies at 331 to 335 (KMSKS). Lysine 334 contacts ATP. The 103-residue stretch at 577 to 679 (TFAAVDLRVA…SGAKPGQRIK (103 aa)) folds into the tRNA-binding domain.

Belongs to the class-I aminoacyl-tRNA synthetase family. MetG type 1 subfamily. In terms of assembly, homodimer. Zn(2+) is required as a cofactor.

The protein localises to the cytoplasm. The catalysed reaction is tRNA(Met) + L-methionine + ATP = L-methionyl-tRNA(Met) + AMP + diphosphate. Its function is as follows. Is required not only for elongation of protein synthesis but also for the initiation of all mRNA translation through initiator tRNA(fMet) aminoacylation. The chain is Methionine--tRNA ligase from Pseudomonas putida (strain GB-1).